The following is a 299-amino-acid chain: tRNA dimethylallyltransferase 2 (299 aa).

ATP is bound at residue 9–16 (GPTGVGKT). 11 to 16 (TGVGKT) is a substrate binding site. The interval 34–37 (DSRQ) is interaction with substrate tRNA.

It belongs to the IPP transferase family. Monomer. Mg(2+) serves as cofactor.

It catalyses the reaction adenosine(37) in tRNA + dimethylallyl diphosphate = N(6)-dimethylallyladenosine(37) in tRNA + diphosphate. Catalyzes the transfer of a dimethylallyl group onto the adenine at position 37 in tRNAs that read codons beginning with uridine, leading to the formation of N6-(dimethylallyl)adenosine (i(6)A). This chain is tRNA dimethylallyltransferase 2, found in Parabacteroides distasonis (strain ATCC 8503 / DSM 20701 / CIP 104284 / JCM 5825 / NCTC 11152).